Reading from the N-terminus, the 184-residue chain is ATP synthase subunit delta (184 aa).

Belongs to the ATPase delta chain family. In terms of assembly, F-type ATPases have 2 components, F(1) - the catalytic core - and F(0) - the membrane proton channel. F(1) has five subunits: alpha(3), beta(3), gamma(1), delta(1), epsilon(1). F(0) has three main subunits: a(1), b(2) and c(10-14). The alpha and beta chains form an alternating ring which encloses part of the gamma chain. F(1) is attached to F(0) by a central stalk formed by the gamma and epsilon chains, while a peripheral stalk is formed by the delta and b chains.

It is found in the cell inner membrane. Its function is as follows. F(1)F(0) ATP synthase produces ATP from ADP in the presence of a proton or sodium gradient. F-type ATPases consist of two structural domains, F(1) containing the extramembraneous catalytic core and F(0) containing the membrane proton channel, linked together by a central stalk and a peripheral stalk. During catalysis, ATP synthesis in the catalytic domain of F(1) is coupled via a rotary mechanism of the central stalk subunits to proton translocation. In terms of biological role, this protein is part of the stalk that links CF(0) to CF(1). It either transmits conformational changes from CF(0) to CF(1) or is implicated in proton conduction. The protein is ATP synthase subunit delta of Rickettsia conorii (strain ATCC VR-613 / Malish 7).